The following is a 376-amino-acid chain: D-alanine--D-alanine ligase (376 aa).

The region spanning K155–D361 is the ATP-grasp domain. ATP is bound at residue E188–E243. D314, E328, and N330 together coordinate Mg(2+).

It belongs to the D-alanine--D-alanine ligase family. Mg(2+) serves as cofactor. It depends on Mn(2+) as a cofactor.

Its subcellular location is the cytoplasm. It carries out the reaction 2 D-alanine + ATP = D-alanyl-D-alanine + ADP + phosphate + H(+). The protein operates within cell wall biogenesis; peptidoglycan biosynthesis. Functionally, cell wall formation. This Acetivibrio thermocellus (strain ATCC 27405 / DSM 1237 / JCM 9322 / NBRC 103400 / NCIMB 10682 / NRRL B-4536 / VPI 7372) (Clostridium thermocellum) protein is D-alanine--D-alanine ligase.